The chain runs to 240 residues: Competence protein ComFC (240 aa).

This sequence belongs to the ComF/GntX family. As to quaternary structure, monomer and dimer in solution. Interacts with ComFA and DprA; ComFA-ComFC form rings about 150 Angstroms in diameter with apparent 6-fold symmetry.

Functionally, involved in transformation (genetic competence for DNA uptake). This is Competence protein ComFC (comFC) from Bacillus subtilis (strain 168).